Here is a 339-residue protein sequence, read N- to C-terminus: MIDADPTLRPEPLPEDNDRALRPQGLGEFIGQAEARANLRVFIESARRRGEAMDHTLFHGPPGLGKTTLAQIVARELGVNFRMTSGPVLAKAGDLAAILTNLEARDVLFIDEIHRLNPAVEEVLYPAMEDFELDLVIGEGPAARTVRIELQPFTLVGATTRMGLLTTPLRDRFGIPTRLQFYTIDELFEIVSRNARKLGAPADDAGAREIARRARGTPRIAGRLLRRVVDFAVVEGDGTITRELADGALTRLGVDQLGLDGADRRYLRLVAENYGGGPVGIETMSAALSESRDALEEVIEPYLLQQGLIQRTPRGRMLAQKAWTHLGIAPPKSQSDLFG.

The segment at 1-22 is disordered; sequence MIDADPTLRPEPLPEDNDRALR. The segment at 1–182 is large ATPase domain (RuvB-L); sequence MIDADPTLRP…FGIPTRLQFY (182 aa). ATP is bound by residues Leu-21, Arg-22, Gly-63, Lys-66, Thr-67, Thr-68, 129–131, Arg-172, Tyr-182, and Arg-219; that span reads EDF. Thr-67 is a Mg(2+) binding site. The tract at residues 183 to 253 is small ATPAse domain (RuvB-S); the sequence is TIDELFEIVS…LADGALTRLG (71 aa). A head domain (RuvB-H) region spans residues 256–339; that stretch reads QLGLDGADRR…PPKSQSDLFG (84 aa). DNA is bound by residues Arg-292, Arg-311, and Arg-316.

The protein belongs to the RuvB family. As to quaternary structure, homohexamer. Forms an RuvA(8)-RuvB(12)-Holliday junction (HJ) complex. HJ DNA is sandwiched between 2 RuvA tetramers; dsDNA enters through RuvA and exits via RuvB. An RuvB hexamer assembles on each DNA strand where it exits the tetramer. Each RuvB hexamer is contacted by two RuvA subunits (via domain III) on 2 adjacent RuvB subunits; this complex drives branch migration. In the full resolvosome a probable DNA-RuvA(4)-RuvB(12)-RuvC(2) complex forms which resolves the HJ.

It localises to the cytoplasm. It catalyses the reaction ATP + H2O = ADP + phosphate + H(+). Functionally, the RuvA-RuvB-RuvC complex processes Holliday junction (HJ) DNA during genetic recombination and DNA repair, while the RuvA-RuvB complex plays an important role in the rescue of blocked DNA replication forks via replication fork reversal (RFR). RuvA specifically binds to HJ cruciform DNA, conferring on it an open structure. The RuvB hexamer acts as an ATP-dependent pump, pulling dsDNA into and through the RuvAB complex. RuvB forms 2 homohexamers on either side of HJ DNA bound by 1 or 2 RuvA tetramers; 4 subunits per hexamer contact DNA at a time. Coordinated motions by a converter formed by DNA-disengaged RuvB subunits stimulates ATP hydrolysis and nucleotide exchange. Immobilization of the converter enables RuvB to convert the ATP-contained energy into a lever motion, pulling 2 nucleotides of DNA out of the RuvA tetramer per ATP hydrolyzed, thus driving DNA branch migration. The RuvB motors rotate together with the DNA substrate, which together with the progressing nucleotide cycle form the mechanistic basis for DNA recombination by continuous HJ branch migration. Branch migration allows RuvC to scan DNA until it finds its consensus sequence, where it cleaves and resolves cruciform DNA. This chain is Holliday junction branch migration complex subunit RuvB, found in Ruegeria sp. (strain TM1040) (Silicibacter sp.).